We begin with the raw amino-acid sequence, 429 residues long: Glycogenin-1 (429 aa).

The UDP site is built by L8, T10, N11, Y14, and R76. 14 residues coordinate UDP-alpha-D-glucose: L8, T10, N11, Y14, R76, K85, D101, A102, D103, N132, S133, D159, D162, and Q163. The UDP site is built by D101, A102, and D103. A Mn(2+)-binding site is contributed by D101. D103 is a Mn(2+) binding site. A glycan (O-linked (Glc...) tyrosine) is linked at Y194. H211, G214, and K217 together coordinate UDP. Mn(2+) is bound at residue H211. Positions 214 and 217 each coordinate UDP-alpha-D-glucose. Disordered regions lie at residues 254 to 274 (VFPS…HPKI) and 300 to 338 (SYDT…QTPH). 2 stretches are compositionally biased toward basic and acidic residues: residues 263–274 (EHRSHSADHPKI) and 309–338 (DSHR…QTPH).

This sequence belongs to the glycosyltransferase 8 family. Glycogenin subfamily. Forms a heterooctamer with one molecule of gyg-1 bound to each protomer of the gys-1 homotetramer. The N-terminus of gys-1 is involved in interprotomer contacts with gyg-1. The interaction with gys-1 is required for glycogen production but is not required for gys-1 intrinsic activity. The cofactor is Mn(2+). Post-translationally, self-glycosylated by the transfer of glucose residues from UDP-glucose to itself, forming an alpha-1,4-glycan of around 10 residues attached to Tyr-194.

The protein resides in the cytoplasm. It localises to the nucleus. The catalysed reaction is L-tyrosyl-[glycogenin] + UDP-alpha-D-glucose = alpha-D-glucosyl-L-tyrosyl-[glycogenin] + UDP + H(+). It catalyses the reaction [1,4-alpha-D-glucosyl](n)-L-tyrosyl-[glycogenin] + UDP-alpha-D-glucose = [1,4-alpha-D-glucosyl](n+1)-L-tyrosyl-[glycogenin] + UDP + H(+). It participates in glycan biosynthesis; glycogen biosynthesis. In terms of biological role, self-glucosylating initiator of glycogen synthesis. It catalyzes the formation of a short alpha (1,4)-glucosyl chain covalently attached via a glucose 1-O-tyrosyl linkage to internal tyrosine residues and these chains act as primers for the elongation reaction catalyzed by glycogen synthase. The polypeptide is Glycogenin-1 (Caenorhabditis elegans).